A 395-amino-acid chain; its full sequence is MAKAKFERSKPHVNIGTIGHVDHGKTTLTAAITTVLAKAGGAEARGYDQIDAAPEERERGITISTAHVEYETETRHYAHVDCPGHADYVKNMITGAAQMDGGILVVSAADGPMPQTREHILLSRQVGVPYIVVFLNKCDMVDDEELLELVEMEVRDLLSEYGFPGDDIPVIKGSALKALQGEADWEAKIIELMAEVDAYIPTPERETDKPFLMPVEDVFSITGRGTVATGRVERGIVKVGDVVEIIGLAEENASTTVTGVEMFRKLLDQAQAGDNIGALLRGVAREDIQRGQVLAKSGSVKAHAKFKAEVFVLSKEEGGRHTPFFANYRPQFYFRTTDVTGIIQLPEGTEMVMPGDNVEMTIELIAPIAIEEGTKFSIREGGRTVGYGVVATIVE.

One can recognise a tr-type G domain in the interval 10–204 (KPHVNIGTIG…EVDAYIPTPE (195 aa)). Residues 19–26 (GHVDHGKT) form a G1 region. 19 to 26 (GHVDHGKT) lines the GTP pocket. T26 is a Mg(2+) binding site. Positions 60-64 (GITIS) are G2. A G3 region spans residues 81–84 (DCPG). Residues 81 to 85 (DCPGH) and 136 to 139 (NKCD) contribute to the GTP site. The G4 stretch occupies residues 136-139 (NKCD). Residues 174–176 (SAL) are G5.

It belongs to the TRAFAC class translation factor GTPase superfamily. Classic translation factor GTPase family. EF-Tu/EF-1A subfamily. Monomer.

The protein resides in the cytoplasm. The catalysed reaction is GTP + H2O = GDP + phosphate + H(+). In terms of biological role, GTP hydrolase that promotes the GTP-dependent binding of aminoacyl-tRNA to the A-site of ribosomes during protein biosynthesis. The chain is Elongation factor Tu from Bacillus cereus (strain ATCC 10987 / NRS 248).